A 45-amino-acid polypeptide reads, in one-letter code: Small polypeptide DEVIL 2 (45 aa).

Residues 14–45 (SQSRRLGKYLKEQKGRIYIIRRCVMMLLCSHD) are required for DVL/RTFL small polypeptide activity. A helical transmembrane segment spans residues 17-33 (RRLGKYLKEQKGRIYII).

Belongs to the DVL/RTFL small polypeptides family. As to expression, mostly expressed in stems and, to a lower extent, in roots and leaves.

The protein resides in the cell membrane. Its function is as follows. Small polypeptide acting as a regulatory molecule which coordinates cellular responses required for differentiation, growth and development, including leaves shape, pedicule elongation, inflorescence organization and fruit maturation, probably by restricting polar cell proliferation in lateral organs and coordinating socket cell recruitment and differentiation at trichome sites. The protein is Small polypeptide DEVIL 2 of Arabidopsis thaliana (Mouse-ear cress).